The primary structure comprises 1244 residues: SWI/SNF chromatin remodeling complex subunit swsn-7 (1244 aa).

The region spanning 24–116 is the ARID domain; that stretch reads QRKMAEFYNS…YLSKFEQVET (93 aa). A compositionally biased stretch (polar residues) spans 486–496; sequence FTQGSNQQQNP. Disordered stretches follow at residues 486–534, 556–583, and 597–619; these read FTQG…GAAP, NREQ…ILAH, and DRRT…ESQL. Positions 497–508 are enriched in low complexity; that stretch reads HHSQGGHQLGHS. Residues 556–566 are compositionally biased toward polar residues; it reads NREQYSTQSSQ. Residues 567 to 578 show a composition bias toward pro residues; that stretch reads PHPPHTNVPPSP. The span at 610 to 619 shows a compositional bias: polar residues; the sequence is PSTNSGESQL. Positions 623–697 form a DNA-binding region, RFX-type winged-helix; the sequence is TEKWIRQNCV…IVAQGIRLIR (75 aa). Residues 1134–1244 are disordered; sequence EEEQQKMLSE…TTPVRAGAGI (111 aa). Positions 1142–1158 are enriched in low complexity; sequence SEVPSSASLSSMAGSSS. Polar residues-rich tracts occupy residues 1159 to 1186 and 1194 to 1212; these read QLPT…SNKP and LNFS…FTAG. Positions 1220 to 1231 are enriched in low complexity; sequence PIQQHIPSQPSP.

Component of the SWI/SNF-B (PBAF) chromatin remodeling complex.

The protein resides in the nucleus. Functionally, involved in transcriptional activation and repression of select genes by chromatin remodeling (alteration of DNA-nucleosome topology). Required for the stability of the SWI/SNF chromatin remodeling complex SWI/SNF-B (PBAF). Required for regulation of a stress response gene network, probably as part of the PBAF complex and perhaps acting in concert with histone demethylase jmjc-1. Binds to the ethanol and stress response elements (ESRE) in the promoter regions of hsp-16.1 and hsp-16.2, probably as part of the PBAF complex. This is SWI/SNF chromatin remodeling complex subunit swsn-7 from Caenorhabditis elegans.